We begin with the raw amino-acid sequence, 569 residues long: Urease subunit alpha (569 aa).

Residues 131 to 569 (GSIDTHIHFI…VPMAQRYFLL (439 aa)) enclose the Urease domain. Residues His136, His138, and Lys219 each contribute to the Ni(2+) site. An N6-carboxylysine modification is found at Lys219. His221 serves as a coordination point for substrate. Ni(2+) is bound by residues His248 and His274. His322 acts as the Proton donor in catalysis. Asp362 lines the Ni(2+) pocket.

It belongs to the metallo-dependent hydrolases superfamily. Urease alpha subunit family. As to quaternary structure, heterotrimer of UreA (gamma), UreB (beta) and UreC (alpha) subunits. Three heterotrimers associate to form the active enzyme. The cofactor is Ni cation. Carboxylation allows a single lysine to coordinate two nickel ions.

It localises to the cytoplasm. The enzyme catalyses urea + 2 H2O + H(+) = hydrogencarbonate + 2 NH4(+). It participates in nitrogen metabolism; urea degradation; CO(2) and NH(3) from urea (urease route): step 1/1. The polypeptide is Urease subunit alpha (Prochlorococcus marinus (strain MIT 9301)).